A 107-amino-acid chain; its full sequence is MEKVLVLLLVALSVAYAAPGPRGIVINLEEGELCLNSAQCKSGCCHHSSALSLARCAPKASENSECSPQTIYGVYYKCPCERGLTCEGDKSIVGSITNTNFGVCLDV.

A signal peptide spans Met1–Ala17. Residues Ala18–Arg22 constitute a propeptide, enterostatin, activation peptide. Intrachain disulfides connect Cys34–Cys45, Cys40–Cys56, Cys44–Cys78, Cys66–Cys86, and Cys80–Cys104.

Belongs to the colipase family. In terms of assembly, forms a 1:1 stoichiometric complex with pancreatic lipase. As to expression, expressed by the pancreas.

It localises to the secreted. Colipase is a cofactor of pancreatic lipase. It allows the lipase to anchor itself to the lipid-water interface. Without colipase the enzyme is washed off by bile salts, which have an inhibitory effect on the lipase. Functionally, enterostatin has a biological activity as a satiety signal. This Oryctolagus cuniculus (Rabbit) protein is Colipase (CLPS).